The chain runs to 318 residues: NADH-ubiquinone oxidoreductase chain 1 (318 aa).

Transmembrane regions (helical) follow at residues 2–22 (FFINILTLLVPILIAMAFLTL), 70–90 (LFIIAPTLSLTLALSLWVPLP), 100–120 (LGILFILATSSLSVYSILWSG), 136–156 (VAQTISYEVTMAIILLSVLLM), 171–191 (HMWLLLPAWPMAMMWFISTLA), 231–251 (IILMNALTTIIFLGPLYYINL), 253–273 (ELYSTNFMMEALLLSSTFLWI), and 293–313 (FLPLTLALCMWHISLPIFTAG).

It belongs to the complex I subunit 1 family. As to quaternary structure, core subunit of respiratory chain NADH dehydrogenase (Complex I) which is composed of 45 different subunits.

The protein localises to the mitochondrion inner membrane. It carries out the reaction a ubiquinone + NADH + 5 H(+)(in) = a ubiquinol + NAD(+) + 4 H(+)(out). Core subunit of the mitochondrial membrane respiratory chain NADH dehydrogenase (Complex I) which catalyzes electron transfer from NADH through the respiratory chain, using ubiquinone as an electron acceptor. Essential for the catalytic activity and assembly of complex I. The chain is NADH-ubiquinone oxidoreductase chain 1 (Mtnd1) from Mus musculus (Mouse).